The chain runs to 199 residues: Recombination protein RecR (199 aa).

The C4-type zinc finger occupies 57–72; the sequence is CSICGNITESDPCMIC. The Toprim domain maps to 80–176; it reads SKVVVVEQPK…KVTRLAHGLA (97 aa).

This sequence belongs to the RecR family.

Its function is as follows. May play a role in DNA repair. It seems to be involved in an RecBC-independent recombinational process of DNA repair. It may act with RecF and RecO. The polypeptide is Recombination protein RecR (Ligilactobacillus salivarius (strain UCC118) (Lactobacillus salivarius)).